The primary structure comprises 217 residues: Lectin ADEL (217 aa).

Cystine bridges form between Cys5–Cys187, Cys42–Cys68, Cys61–Cys77, Cys114–Cys135, and Cys142–Cys206. Asn30 carries N-linked (GlcNAc...) asparagine glycosylation. N-linked (GlcNAc...) asparagine glycans are attached at residues Asn102 and Asn126.

As to quaternary structure, homodimer; disulfide-linked. Contains disulfide bonds.

In terms of biological role, binds in decreasing order of affinity: galacturonic acid, D-galactosamine, methyl-alpha-D-galactopyranoside and further galactose-containing carbohydrates. Has hemagglutinating activity against human and rabbit erythrocytes. This Aplysia dactylomela (Spotted sea hare) protein is Lectin ADEL.